Consider the following 272-residue polypeptide: Insulin-like growth factor-binding protein 1 (272 aa).

A signal peptide spans 1-25; that stretch reads MPEVPAAGLWPFLLLLAVQVSTVAS. Residues 28 to 109 form the IGFBP N-terminal domain; the sequence is QPWHCAPCSA…TRGQGACVPE (82 aa). 5 disulfides stabilise this stretch: cysteine 32-cysteine 59, cysteine 35-cysteine 61, cysteine 43-cysteine 62, cysteine 50-cysteine 65, and cysteine 73-cysteine 86. 3 positions are modified to phosphoserine: serine 139, serine 157, and serine 169. The residue at position 170 (threonine 170) is a Phosphothreonine. Phosphotyrosine is present on tyrosine 171. One can recognise a Thyroglobulin type-1 domain in the interval 186–264; that stretch reads KQPCRRELYK…SLEIRGDPNC (79 aa). 3 disulfides stabilise this stretch: cysteine 189/cysteine 219, cysteine 230/cysteine 241, and cysteine 243/cysteine 264. A Phosphoserine modification is found at serine 255. The Cell attachment site signature appears at 259 to 261; sequence RGD.

In terms of assembly, binds equally well IGF1 and IGF2. Interacts with integrin ITGA5:ITGB1. Interacts with VHL; this interaction inhibits HIF1A degradation.

The protein localises to the secreted. Its function is as follows. Multifunctional protein that plays a critical role in regulating the availability of IGFs such as IGF1 and IGF2 to their receptors and thereby regulates IGF-mediated cellular processes including cell migration, proliferation, differentiation or apoptosis in a cell-type specific manner. Also plays a positive role in cell migration by interacting with integrin ITGA5:ITGB1 through its RGD motif. Mechanistically, binding to integrins leads to activation of focal adhesion kinase/PTK2 and stimulation of the mitogen-activated protein kinase (MAPK) pathway. Regulates cardiomyocyte apoptosis by suppressing HIF-1alpha/HIF1A degradation through ubiquitination. The sequence is that of Insulin-like growth factor-binding protein 1 (IGFBP1) from Ictidomys tridecemlineatus (Thirteen-lined ground squirrel).